Consider the following 283-residue polypeptide: 1D-myo-inositol 2-acetamido-2-deoxy-alpha-D-glucopyranoside deacetylase (283 aa).

Positions 7, 10, and 148 each coordinate Zn(2+).

It belongs to the MshB deacetylase family. Zn(2+) serves as cofactor.

The catalysed reaction is 1D-myo-inositol 2-acetamido-2-deoxy-alpha-D-glucopyranoside + H2O = 1D-myo-inositol 2-amino-2-deoxy-alpha-D-glucopyranoside + acetate. Catalyzes the deacetylation of 1D-myo-inositol 2-acetamido-2-deoxy-alpha-D-glucopyranoside (GlcNAc-Ins) in the mycothiol biosynthesis pathway. The polypeptide is 1D-myo-inositol 2-acetamido-2-deoxy-alpha-D-glucopyranoside deacetylase (Gordonia bronchialis (strain ATCC 25592 / DSM 43247 / BCRC 13721 / JCM 3198 / KCTC 3076 / NBRC 16047 / NCTC 10667) (Rhodococcus bronchialis)).